The primary structure comprises 427 residues: Septin-8-A (427 aa).

One can recognise a Septin-type G domain in the interval 39 to 305 (QGFCFNILCV…ELYRRCKLEE (267 aa)). Residues 49–56 (GETGIGKS) are G1 motif. Residues 49 to 56 (GETGIGKS), G104, 185 to 193 (KADTISKSE), G239, and R254 each bind GTP. The interval 101 to 104 (DTVG) is G3 motif. The interval 184–187 (AKAD) is G4 motif. Residues 320-409 (LQETYEAKRK…KAAMEALQSQ (90 aa)) are a coiled coil. A compositionally biased stretch (basic and acidic residues) spans 376–389 (QEESKKVEDKRRDL). The disordered stretch occupies residues 376-427 (QEESKKVEDKRRDLEEEMNSFNRRKAAMEALQSQSFQATSQQPLKKDKDRKN). The span at 406–418 (LQSQSFQATSQQP) shows a compositional bias: polar residues.

This sequence belongs to the TRAFAC class TrmE-Era-EngA-EngB-Septin-like GTPase superfamily. Septin GTPase family.

This is Septin-8-A (sept8-a) from Xenopus laevis (African clawed frog).